We begin with the raw amino-acid sequence, 407 residues long: Lysosome-associated membrane glycoprotein 1 (407 aa).

The first 21 residues, 1–21 (MAAPGARRPLLLLLLAGLAHS), serve as a signal peptide directing secretion. A first lumenal domain region spans residues 22-189 (APALFEVKDN…SKEETRCPQD (168 aa)). At 22-371 (APALFEVKDN…VEECVQDGNN (350 aa)) the chain is on the lumenal side. N-linked (GlcNAc...) asparagine glycans are attached at residues Asn-32, Asn-59, Asn-71, Asn-79, Asn-102, Asn-116, Asn-125, Asn-145, Asn-160, and Asn-178. Cys-36 and Cys-75 are disulfide-bonded. Cys-150 and Cys-186 form a disulfide bridge. The disordered stretch occupies residues 180–211 (SKEETRCPQDQPSPTTGPPSPSPPLVPTNPSV). A hinge region spans residues 190–219 (QPSPTTGPPSPSPPLVPTNPSVSKYNVTGD). Residues 194–206 (TTGPPSPSPPLVP) are compositionally biased toward pro residues. Asn-215, Asn-220, Asn-233, Asn-241, Asn-271, Asn-283, Asn-297, and Asn-312 each carry an N-linked (GlcNAc...) asparagine glycan. Residues 220-371 (NGTCLLASMA…VEECVQDGNN (152 aa)) are second lumenal domain. Cys-223 and Cys-260 form a disulfide bridge. A disulfide bridge links Cys-328 with Cys-365. The chain crosses the membrane as a helical span at residues 372 to 395 (MLIPIAVGGALAGLVLIVLIAYLI). Residues 396–407 (GRKRSHAGYQTI) lie on the Cytoplasmic side of the membrane.

This sequence belongs to the LAMP family. Interacts with ABCB9; this interaction strongly stabilizes ABCB9 and protects ABCB9 against lysosomal degradation. Interacts with FURIN. Interacts with TMEM175; inhibiting the proton channel activity of TMEM175. O- and N-glycosylated; some of the N-glycans attached to LAMP-1 are polylactosaminoglycans.

The protein localises to the lysosome membrane. The protein resides in the endosome membrane. It localises to the late endosome membrane. It is found in the cell membrane. Its subcellular location is the cytolytic granule membrane. In terms of biological role, lysosomal membrane glycoprotein which plays an important role in lysosome biogenesis, lysosomal pH regulation, autophagy and cholesterol homeostasis. Acts as an important regulator of lysosomal lumen pH regulation by acting as a direct inhibitor of the proton channel TMEM175, facilitating lysosomal acidification for optimal hydrolase activity. Also plays an important role in NK-cells cytotoxicity. Mechanistically, participates in cytotoxic granule movement to the cell surface and perforin trafficking to the lytic granule. In addition, protects NK-cells from degranulation-associated damage induced by their own cytotoxic granule content. Presents carbohydrate ligands to selectins. This chain is Lysosome-associated membrane glycoprotein 1 (Lamp1), found in Rattus norvegicus (Rat).